Reading from the N-terminus, the 450-residue chain is UDP-N-acetylmuramoylalanine--D-glutamate ligase (450 aa).

Residue 115 to 121 coordinates ATP; it reads GTNGKST.

This sequence belongs to the MurCDEF family.

It is found in the cytoplasm. It carries out the reaction UDP-N-acetyl-alpha-D-muramoyl-L-alanine + D-glutamate + ATP = UDP-N-acetyl-alpha-D-muramoyl-L-alanyl-D-glutamate + ADP + phosphate + H(+). It functions in the pathway cell wall biogenesis; peptidoglycan biosynthesis. Cell wall formation. Catalyzes the addition of glutamate to the nucleotide precursor UDP-N-acetylmuramoyl-L-alanine (UMA). In Syntrophotalea carbinolica (strain DSM 2380 / NBRC 103641 / GraBd1) (Pelobacter carbinolicus), this protein is UDP-N-acetylmuramoylalanine--D-glutamate ligase.